Consider the following 240-residue polypeptide: Insulin-like growth factor-binding protein 3 receptor (240 aa).

An N-terminal signal peptide occupies residues 1–38 (MGSCQAGHNLHLCLAHHPPLVCATLILLLLGLSGLGLG). At 39 to 204 (GFLLTHTTGL…SEELALCGSR (166 aa)) the chain is on the extracellular side. A glycan (N-linked (GlcNAc...) asparagine) is linked at Asn167. Residues 205-225 (VLGLGFFLVLLCGLLCCTTAV) traverse the membrane as a helical segment. The Cytoplasmic portion of the chain corresponds to 226 to 240 (CFHPRPEFHWSRTRL).

As to quaternary structure, interacts with IGFBP3. Interacts with CASP8.

It is found in the cell membrane. In terms of biological role, cell death receptor specific for IGFBP3, may mediate caspase-8-dependent apoptosis upon ligand binding. The chain is Insulin-like growth factor-binding protein 3 receptor (Tmem219) from Mus musculus (Mouse).